Here is a 145-residue protein sequence, read N- to C-terminus: Ribosome-binding factor A (145 aa).

The span at 122–132 (KVQRDLESAPR) shows a compositional bias: basic and acidic residues. The disordered stretch occupies residues 122 to 145 (KVQRDLESAPREDDEGEPASSSRD).

This sequence belongs to the RbfA family. As to quaternary structure, monomer. Binds 30S ribosomal subunits, but not 50S ribosomal subunits or 70S ribosomes.

The protein localises to the cytoplasm. One of several proteins that assist in the late maturation steps of the functional core of the 30S ribosomal subunit. Associates with free 30S ribosomal subunits (but not with 30S subunits that are part of 70S ribosomes or polysomes). Required for efficient processing of 16S rRNA. May interact with the 5'-terminal helix region of 16S rRNA. This chain is Ribosome-binding factor A, found in Methylorubrum extorquens (strain CM4 / NCIMB 13688) (Methylobacterium extorquens).